The primary structure comprises 476 residues: Bifunctional protein HldE (476 aa).

The ribokinase stretch occupies residues 1 to 318; sequence MKVTLPDFRR…ENAIRGRAET (318 aa). 195-198 contributes to the ATP binding site; sequence NLSE. D264 is a catalytic residue. Positions 344–476 are cytidylyltransferase; it reads MTNGIFDILH…IIQSIKNGLG (133 aa).

In the N-terminal section; belongs to the carbohydrate kinase PfkB family. It in the C-terminal section; belongs to the cytidylyltransferase family. Homodimer.

The enzyme catalyses D-glycero-beta-D-manno-heptose 7-phosphate + ATP = D-glycero-beta-D-manno-heptose 1,7-bisphosphate + ADP + H(+). The catalysed reaction is D-glycero-beta-D-manno-heptose 1-phosphate + ATP + H(+) = ADP-D-glycero-beta-D-manno-heptose + diphosphate. The protein operates within nucleotide-sugar biosynthesis; ADP-L-glycero-beta-D-manno-heptose biosynthesis; ADP-L-glycero-beta-D-manno-heptose from D-glycero-beta-D-manno-heptose 7-phosphate: step 1/4. It participates in nucleotide-sugar biosynthesis; ADP-L-glycero-beta-D-manno-heptose biosynthesis; ADP-L-glycero-beta-D-manno-heptose from D-glycero-beta-D-manno-heptose 7-phosphate: step 3/4. Catalyzes the phosphorylation of D-glycero-D-manno-heptose 7-phosphate at the C-1 position to selectively form D-glycero-beta-D-manno-heptose-1,7-bisphosphate. In terms of biological role, catalyzes the ADP transfer from ATP to D-glycero-beta-D-manno-heptose 1-phosphate, yielding ADP-D-glycero-beta-D-manno-heptose. The protein is Bifunctional protein HldE of Yersinia enterocolitica serotype O:8 / biotype 1B (strain NCTC 13174 / 8081).